A 954-amino-acid chain; its full sequence is Glycine dehydrogenase (decarboxylating) (954 aa).

K706 carries the N6-(pyridoxal phosphate)lysine modification.

It belongs to the GcvP family. As to quaternary structure, the glycine cleavage system is composed of four proteins: P, T, L and H. Pyridoxal 5'-phosphate serves as cofactor.

The enzyme catalyses N(6)-[(R)-lipoyl]-L-lysyl-[glycine-cleavage complex H protein] + glycine + H(+) = N(6)-[(R)-S(8)-aminomethyldihydrolipoyl]-L-lysyl-[glycine-cleavage complex H protein] + CO2. The glycine cleavage system catalyzes the degradation of glycine. The P protein binds the alpha-amino group of glycine through its pyridoxal phosphate cofactor; CO(2) is released and the remaining methylamine moiety is then transferred to the lipoamide cofactor of the H protein. The polypeptide is Glycine dehydrogenase (decarboxylating) (Pseudomonas savastanoi pv. phaseolicola (strain 1448A / Race 6) (Pseudomonas syringae pv. phaseolicola (strain 1448A / Race 6))).